The primary structure comprises 292 residues: 4-hydroxy-tetrahydrodipicolinate synthase (292 aa).

Threonine 45 provides a ligand contact to pyruvate. Tyrosine 133 functions as the Proton donor/acceptor in the catalytic mechanism. Catalysis depends on lysine 161, which acts as the Schiff-base intermediate with substrate. Residue isoleucine 203 participates in pyruvate binding.

The protein belongs to the DapA family. In terms of assembly, homotetramer; dimer of dimers.

Its subcellular location is the cytoplasm. It carries out the reaction L-aspartate 4-semialdehyde + pyruvate = (2S,4S)-4-hydroxy-2,3,4,5-tetrahydrodipicolinate + H2O + H(+). It functions in the pathway amino-acid biosynthesis; L-lysine biosynthesis via DAP pathway; (S)-tetrahydrodipicolinate from L-aspartate: step 3/4. Its function is as follows. Catalyzes the condensation of (S)-aspartate-beta-semialdehyde [(S)-ASA] and pyruvate to 4-hydroxy-tetrahydrodipicolinate (HTPA). This Herminiimonas arsenicoxydans protein is 4-hydroxy-tetrahydrodipicolinate synthase.